Consider the following 123-residue polypeptide: Translation initiation factor 1A (123 aa).

Over residues 1-11 the composition is skewed to acidic residues; that stretch reads MSPDKTEDEDK. Positions 1 to 26 are disordered; it reads MSPDKTEDEDKDVNVDQDQFNEEEES. Residues 28–102 form the S1-like domain; it reads GRVILPNKKK…EKADVVYRYT (75 aa).

This sequence belongs to the eIF-1A family.

Its function is as follows. Seems to be required for maximal rate of protein biosynthesis. Enhances ribosome dissociation into subunits and stabilizes the binding of the initiator Met-tRNA(I) to 40 S ribosomal subunits. This is Translation initiation factor 1A (eIF1A) from Thermoplasma volcanium (strain ATCC 51530 / DSM 4299 / JCM 9571 / NBRC 15438 / GSS1).